The primary structure comprises 416 residues: Deferrochelatase (416 aa).

A signal peptide (tat-type signal) is located at residues 1 to 28; it reads MSDEQKKPEQIHRRDILKWGAMAGAAVA. 241–243 contacts heme b; it reads GTG. A disordered region spans residues 293–318; the sequence is QEDTFGRRKSSGAPFGQKKETDPVKL. Positions 326 and 339 each coordinate heme b.

This sequence belongs to the DyP-type peroxidase family. Component of the iron transporter efeUOB/M complex composed of EfeU, EfeM and EfeB; EfeU is essential for the complex formation. Heme b serves as cofactor. Exported by the Tat system. The position of the signal peptide cleavage has not been experimentally proven.

Its subcellular location is the secreted. It localises to the cell membrane. It catalyses the reaction heme b + 2 H(+) = protoporphyrin IX + Fe(2+). The enzyme catalyses 2 Fe(2+) + H2O2 + 2 H(+) = 2 Fe(3+) + 2 H2O. In terms of biological role, involved in the recovery of exogenous heme iron. Extracts iron from heme while preserving the protoporphyrin ring intact. Part of the iron transporter system efeUOB/M involved in iron import. Catalyzes the peroxide-mediated oxidation of Fe(2+) into Fe(3+); EfeM binds Fe(3+) and delivers it to the cell membrane permease EfeU. This chain is Deferrochelatase, found in Bacillus subtilis (strain 168).